We begin with the raw amino-acid sequence, 347 residues long: Extracellular exo-alpha-(1-&gt;5)-L-arabinofuranosidase ArbA (347 aa).

Positions 1 to 31 (MPTHHPITRQHWHHSWLSALALLCASLACGA) are cleaved as a signal peptide. A substrate-binding site is contributed by D35. Residue D38 is the Proton acceptor of the active site. Substrate is bound by residues 90-92 (DGH), 115-116 (GK), N155, S175, and E221. E221 acts as the Proton donor in catalysis. Residue H291 coordinates Ca(2+). Q316 lines the substrate pocket.

Belongs to the glycosyl hydrolase 43 family. As to quaternary structure, homodimer.

The protein resides in the secreted. The enzyme catalyses Hydrolysis of terminal non-reducing alpha-L-arabinofuranoside residues in alpha-L-arabinosides.. Its pathway is glycan metabolism; L-arabinan degradation. In terms of biological role, involved in the degradation of arabinan and is a key enzyme in the complete degradation of the plant cell wall. Catalyzes the cleavage of the terminal alpha-(1-&gt;5)-arabinofuranosyl bonds of linear arabinan and carboxymethylarabinan to produce almost exclusively arabinotriose. This is Extracellular exo-alpha-(1-&gt;5)-L-arabinofuranosidase ArbA (arbA) from Cellvibrio japonicus (strain Ueda107) (Pseudomonas fluorescens subsp. cellulosa).